We begin with the raw amino-acid sequence, 654 residues long: Fructose-1,6-bisphosphatase class 3 (654 aa).

The interval 288–307 is disordered; it reads NPAFKPKKRPDKHERLTQRE. Basic and acidic residues predominate over residues 298–307; the sequence is DKHERLTQRE.

The protein belongs to the FBPase class 3 family. It depends on Mn(2+) as a cofactor.

The catalysed reaction is beta-D-fructose 1,6-bisphosphate + H2O = beta-D-fructose 6-phosphate + phosphate. It participates in carbohydrate biosynthesis; gluconeogenesis. This Staphylococcus aureus (strain bovine RF122 / ET3-1) protein is Fructose-1,6-bisphosphatase class 3.